A 391-amino-acid chain; its full sequence is Probable malate dehydrogenase 1 (391 aa).

68–74 (GAAGQIA) is an NAD(+) binding site. The substrate site is built by Arg-149 and Arg-155. Residues Asn-162, Gln-169, and 186-188 (VGN) contribute to the NAD(+) site. Substrate contacts are provided by Asn-188 and Arg-219. His-244 acts as the Proton acceptor in catalysis.

The protein belongs to the LDH/MDH superfamily. MDH type 2 family. Homodimer.

It catalyses the reaction (S)-malate + NAD(+) = oxaloacetate + NADH + H(+). Catalyzes the reversible oxidation of malate to oxaloacetate. This Dictyostelium discoideum (Social amoeba) protein is Probable malate dehydrogenase 1 (mdhA).